A 1405-amino-acid polypeptide reads, in one-letter code: DNA-directed RNA polymerase subunit beta' (1405 aa).

Zn(2+) contacts are provided by Cys70, Cys72, Cys85, and Cys88. The Mg(2+) site is built by Asp460, Asp462, and Asp464. Zn(2+) is bound by residues Cys815, Cys890, Cys897, and Cys900.

Belongs to the RNA polymerase beta' chain family. The RNAP catalytic core consists of 2 alpha, 1 beta, 1 beta' and 1 omega subunit. When a sigma factor is associated with the core the holoenzyme is formed, which can initiate transcription. The cofactor is Mg(2+). It depends on Zn(2+) as a cofactor.

The catalysed reaction is RNA(n) + a ribonucleoside 5'-triphosphate = RNA(n+1) + diphosphate. Functionally, DNA-dependent RNA polymerase catalyzes the transcription of DNA into RNA using the four ribonucleoside triphosphates as substrates. The polypeptide is DNA-directed RNA polymerase subunit beta' (Xanthomonas campestris pv. campestris (strain B100)).